The following is a 339-amino-acid chain: DNA-directed RNA polymerase subunit alpha (339 aa).

An alpha N-terminal domain (alpha-NTD) region spans residues 1–235; sequence MVLQKNWQSL…DQLQLFINFD (235 aa). Residues 251–339 form an alpha C-terminal domain (alpha-CTD) region; it reads FNRNLLRKVD…DLAKRLDEPF (89 aa).

It belongs to the RNA polymerase alpha chain family. Homodimer. The RNAP catalytic core consists of 2 alpha, 1 beta, 1 beta' and 1 omega subunit. When a sigma factor is associated with the core the holoenzyme is formed, which can initiate transcription.

It catalyses the reaction RNA(n) + a ribonucleoside 5'-triphosphate = RNA(n+1) + diphosphate. DNA-dependent RNA polymerase catalyzes the transcription of DNA into RNA using the four ribonucleoside triphosphates as substrates. This Gluconacetobacter diazotrophicus (strain ATCC 49037 / DSM 5601 / CCUG 37298 / CIP 103539 / LMG 7603 / PAl5) protein is DNA-directed RNA polymerase subunit alpha.